The following is a 434-amino-acid chain: 3-isopropylmalate dehydratase large subunit 1 (434 aa).

The [4Fe-4S] cluster site is built by C308, C368, and C371.

Belongs to the aconitase/IPM isomerase family. LeuC type 2 subfamily. Heterodimer of LeuC and LeuD. [4Fe-4S] cluster is required as a cofactor.

The enzyme catalyses (2R,3S)-3-isopropylmalate = (2S)-2-isopropylmalate. It participates in amino-acid biosynthesis; L-leucine biosynthesis; L-leucine from 3-methyl-2-oxobutanoate: step 2/4. Functionally, catalyzes the isomerization between 2-isopropylmalate and 3-isopropylmalate, via the formation of 2-isopropylmaleate. This is 3-isopropylmalate dehydratase large subunit 1 from Deinococcus radiodurans (strain ATCC 13939 / DSM 20539 / JCM 16871 / CCUG 27074 / LMG 4051 / NBRC 15346 / NCIMB 9279 / VKM B-1422 / R1).